Consider the following 904-residue polypeptide: NADH-quinone oxidoreductase subunit G (904 aa).

Positions 1–83 constitute a 2Fe-2S ferredoxin-type domain; the sequence is MATIHVDGKE…GSWISIDDEE (83 aa). [2Fe-2S] cluster is bound by residues C34, C45, C48, and C67. One can recognise a 4Fe-4S His(Cys)3-ligated-type domain in the interval 83-122; it reads EAKVFRASVVEWLMTNHPHDCPVCEEGGHCHLQDMTVMTG. [4Fe-4S] cluster is bound by residues H99, C103, C106, C112, C151, C154, C157, C201, C228, C231, C235, and C263. Residues 221–277 form the 4Fe-4S Mo/W bis-MGD-type domain; it reads MQFSPSICHGCSSGCNISPGERYGELRRIENRFNGSVNQYFLCDRGRFGYGYVNRKD.

It belongs to the complex I 75 kDa subunit family. As to quaternary structure, composed of 13 different subunits. Subunits NuoCD, E, F, and G constitute the peripheral sector of the complex. Requires [2Fe-2S] cluster as cofactor. [4Fe-4S] cluster serves as cofactor.

It carries out the reaction a quinone + NADH + 5 H(+)(in) = a quinol + NAD(+) + 4 H(+)(out). In terms of biological role, NDH-1 shuttles electrons from NADH, via FMN and iron-sulfur (Fe-S) centers, to quinones in the respiratory chain. The immediate electron acceptor for the enzyme in this species is believed to be ubiquinone. Couples the redox reaction to proton translocation (for every two electrons transferred, four hydrogen ions are translocated across the cytoplasmic membrane), and thus conserves the redox energy in a proton gradient. Required for plants roots colonization. This chain is NADH-quinone oxidoreductase subunit G (nuoG), found in Pseudomonas fluorescens.